Reading from the N-terminus, the 363-residue chain is UDP-3-O-acylglucosamine N-acyltransferase (363 aa).

His-252 functions as the Proton acceptor in the catalytic mechanism.

This sequence belongs to the transferase hexapeptide repeat family. LpxD subfamily. In terms of assembly, homotrimer.

It carries out the reaction a UDP-3-O-[(3R)-3-hydroxyacyl]-alpha-D-glucosamine + a (3R)-hydroxyacyl-[ACP] = a UDP-2-N,3-O-bis[(3R)-3-hydroxyacyl]-alpha-D-glucosamine + holo-[ACP] + H(+). The protein operates within bacterial outer membrane biogenesis; LPS lipid A biosynthesis. Its function is as follows. Catalyzes the N-acylation of UDP-3-O-acylglucosamine using 3-hydroxyacyl-ACP as the acyl donor. Is involved in the biosynthesis of lipid A, a phosphorylated glycolipid that anchors the lipopolysaccharide to the outer membrane of the cell. The protein is UDP-3-O-acylglucosamine N-acyltransferase of Cupriavidus necator (strain ATCC 17699 / DSM 428 / KCTC 22496 / NCIMB 10442 / H16 / Stanier 337) (Ralstonia eutropha).